The chain runs to 201 residues: Recombination protein RecR (201 aa).

The C4-type zinc-finger motif lies at 60-75 (CSRCGNVDTVDPCTVC). The Toprim domain occupies 83–178 (SIIIVVEDVS…KITRLAHGVP (96 aa)).

This sequence belongs to the RecR family.

In terms of biological role, may play a role in DNA repair. It seems to be involved in an RecBC-independent recombinational process of DNA repair. It may act with RecF and RecO. This chain is Recombination protein RecR, found in Rhizobium leguminosarum bv. trifolii (strain WSM2304).